The chain runs to 234 residues: UPF0502 protein BTH_II0990 (234 aa).

Belongs to the UPF0502 family.

In Burkholderia thailandensis (strain ATCC 700388 / DSM 13276 / CCUG 48851 / CIP 106301 / E264), this protein is UPF0502 protein BTH_II0990.